We begin with the raw amino-acid sequence, 142 residues long: Hemoglobin subunit alpha (142 aa).

The 141-residue stretch at 2–142 (VLSPADKTNV…VSTVLTSKYR (141 aa)) folds into the Globin domain. S4 is modified (phosphoserine). K8 carries the N6-succinyllysine modification. Phosphothreonine is present on T9. Residue K12 is modified to N6-succinyllysine. K17 is modified (N6-acetyllysine; alternate). N6-succinyllysine; alternate is present on K17. At Y25 the chain carries Phosphotyrosine. S36 carries the phosphoserine modification. K41 is modified (N6-succinyllysine). Position 50 is a phosphoserine (S50). H59 contacts O2. H88 contributes to the heme b binding site. S103 bears the Phosphoserine mark. Phosphothreonine is present on T109. 2 positions are modified to phosphoserine: S125 and S132. Residues T135 and T138 each carry the phosphothreonine modification. S139 carries the post-translational modification Phosphoserine.

The protein belongs to the globin family. Heterotetramer of two alpha chains and two beta chains in adult hemoglobin A (HbA); two alpha chains and two delta chains in adult hemoglobin A2 (HbA2); two alpha chains and two epsilon chains in early embryonic hemoglobin Gower-2; two alpha chains and two gamma chains in fetal hemoglobin F (HbF). Red blood cells.

In terms of biological role, involved in oxygen transport from the lung to the various peripheral tissues. Hemopressin acts as an antagonist peptide of the cannabinoid receptor CNR1. Hemopressin-binding efficiently blocks cannabinoid receptor CNR1 and subsequent signaling. This is Hemoglobin subunit alpha (HBA1) from Pan paniscus (Pygmy chimpanzee).